We begin with the raw amino-acid sequence, 76 residues long: MVNRRRKKMKKKVCTFCADKSSKIDYKEVHKLKKYVTERGKILPRRISGNCAIHQRDITQAIKRSRHIALLPYTID.

It belongs to the bacterial ribosomal protein bS18 family. Part of the 30S ribosomal subunit. Forms a tight heterodimer with protein bS6.

Binds as a heterodimer with protein bS6 to the central domain of the 16S rRNA, where it helps stabilize the platform of the 30S subunit. In Alkaliphilus metalliredigens (strain QYMF), this protein is Small ribosomal subunit protein bS18.